A 153-amino-acid polypeptide reads, in one-letter code: MKLNELYNNIGAKKNKKRIARGIGSGKGKTGGRGIKGQKSRSGVAIKGFEGGQTPMIKRLPKRGFNCISTKKYNIINIYNIEEALADGRLSAADTITKEKLVEVGVVNNKNNKKLVKLLSICSDDFASPLSLKLDAYSSKAKDLIEKAGGKLL.

The segment at 21-41 (RGIGSGKGKTGGRGIKGQKSR) is disordered. Gly residues predominate over residues 23 to 35 (IGSGKGKTGGRGI).

It belongs to the universal ribosomal protein uL15 family. Part of the 50S ribosomal subunit.

Functionally, binds to the 23S rRNA. The polypeptide is Large ribosomal subunit protein uL15 (Rickettsia felis (strain ATCC VR-1525 / URRWXCal2) (Rickettsia azadi)).